We begin with the raw amino-acid sequence, 118 residues long: Large ribosomal subunit protein bL19 (118 aa).

Belongs to the bacterial ribosomal protein bL19 family.

Its function is as follows. This protein is located at the 30S-50S ribosomal subunit interface and may play a role in the structure and function of the aminoacyl-tRNA binding site. The sequence is that of Large ribosomal subunit protein bL19 from Dictyoglomus turgidum (strain DSM 6724 / Z-1310).